The sequence spans 403 residues: Na(+)/H(+) antiporter NhaA (403 aa).

The next 12 membrane-spanning stretches (helical) occupy residues Ile25 to Phe45, Leu70 to Ile90, Ile105 to Ala125, Gly136 to Gly156, Val165 to Ala185, Glu188 to Leu208, Val213 to Ser233, Gly234 to Gly254, Val269 to Val289, Ile302 to Val322, Gly340 to Phe360, and Val369 to Ala389.

It belongs to the NhaA Na(+)/H(+) (TC 2.A.33) antiporter family.

The protein resides in the cell inner membrane. It catalyses the reaction Na(+)(in) + 2 H(+)(out) = Na(+)(out) + 2 H(+)(in). In terms of biological role, na(+)/H(+) antiporter that extrudes sodium in exchange for external protons. The sequence is that of Na(+)/H(+) antiporter NhaA from Maricaulis maris (strain MCS10) (Caulobacter maris).